Here is a 555-residue protein sequence, read N- to C-terminus: Intraflagellar transport protein 56 (555 aa).

3 TPR repeats span residues 57–90, 151–184, and 393–426; these read LKNL…EDPD, IEDQ…HRDY, and DDFN…KYRN.

The protein belongs to the IFT56 family. Component of the IFT complex B.

It localises to the cell projection. It is found in the cilium. Its subcellular location is the flagellum. Functionally, component of the intraflagellar transport (IFT) complex B required for transport of proteins in the motile cilium. Required for transport of specific ciliary cargo proteins related to motility, while it is neither required for IFT complex B assembly or motion nor for cilium assembly. In Chlamydomonas reinhardtii (Chlamydomonas smithii), this protein is Intraflagellar transport protein 56.